The following is a 230-amino-acid chain: Antiholin-like protein LrgB (230 aa).

8 helical membrane passes run 5-25 (MTPY…TLLF), 30-50 (GFFL…FLKV), 61-81 (GGKM…IPLY), 92-112 (WQIL…VYIV), 126-146 (MLPQ…IGGI), 149-169 (ITSF…ALFL), 177-197 (PIAK…AVGI), and 209-229 (IAVT…MPFI).

It belongs to the CidB/LrgB family. LrgB subfamily.

It localises to the cell membrane. Its function is as follows. Inhibits the expression or activity of extracellular murein hydrolases by interacting, possibly with LrgA, with the holin-like protein CidA. The LrgAB and CidA proteins may affect the proton motive force of the membrane. May be involved in programmed cell death (PCD), possibly triggering PCD in response to antibiotics and environmental stresses. This is Antiholin-like protein LrgB from Bacillus mycoides (strain KBAB4) (Bacillus weihenstephanensis).